A 308-amino-acid polypeptide reads, in one-letter code: tRNA dimethylallyltransferase (308 aa).

Residue 10–17 coordinates ATP; that stretch reads GPTASGKT. Residue 12-17 participates in substrate binding; that stretch reads TASGKT. Interaction with substrate tRNA stretches follow at residues 35–38 and 159–163; these read DSSL and QRIFR.

This sequence belongs to the IPP transferase family. In terms of assembly, monomer. It depends on Mg(2+) as a cofactor.

It catalyses the reaction adenosine(37) in tRNA + dimethylallyl diphosphate = N(6)-dimethylallyladenosine(37) in tRNA + diphosphate. Its function is as follows. Catalyzes the transfer of a dimethylallyl group onto the adenine at position 37 in tRNAs that read codons beginning with uridine, leading to the formation of N6-(dimethylallyl)adenosine (i(6)A). The chain is tRNA dimethylallyltransferase from Francisella tularensis subsp. novicida (strain U112).